Reading from the N-terminus, the 199-residue chain is Large ribosomal subunit protein uL4 (199 aa).

It belongs to the universal ribosomal protein uL4 family. Part of the 50S ribosomal subunit.

One of the primary rRNA binding proteins, this protein initially binds near the 5'-end of the 23S rRNA. It is important during the early stages of 50S assembly. It makes multiple contacts with different domains of the 23S rRNA in the assembled 50S subunit and ribosome. In terms of biological role, forms part of the polypeptide exit tunnel. In Aquifex pyrophilus, this protein is Large ribosomal subunit protein uL4.